Reading from the N-terminus, the 129-residue chain is ATP synthase epsilon chain (129 aa).

The protein belongs to the ATPase epsilon chain family. As to quaternary structure, F-type ATPases have 2 components, CF(1) - the catalytic core - and CF(0) - the membrane proton channel. CF(1) has five subunits: alpha(3), beta(3), gamma(1), delta(1), epsilon(1). CF(0) has three main subunits: a, b and c.

Its subcellular location is the cell inner membrane. Functionally, produces ATP from ADP in the presence of a proton gradient across the membrane. The chain is ATP synthase epsilon chain from Campylobacter fetus subsp. fetus (strain 82-40).